The following is a 100-amino-acid chain: uncharacterized protein (100 aa).

This is an uncharacterized protein from Rhizobium leguminosarum bv. phaseoli.